Reading from the N-terminus, the 139-residue chain is Large ribosomal subunit protein uL16 (139 aa).

A compositionally biased stretch (basic residues) spans 1-20; that stretch reads MLIPRRVKHRKQHHPKRRGM. The disordered stretch occupies residues 1–22; that stretch reads MLIPRRVKHRKQHHPKRRGMAK.

The protein belongs to the universal ribosomal protein uL16 family. In terms of assembly, part of the 50S ribosomal subunit.

Functionally, binds 23S rRNA and is also seen to make contacts with the A and possibly P site tRNAs. In Streptomyces coelicolor (strain ATCC BAA-471 / A3(2) / M145), this protein is Large ribosomal subunit protein uL16.